The following is a 128-amino-acid chain: uncharacterized protein (128 aa).

This is an uncharacterized protein from Mycobacterium bovis (strain ATCC BAA-935 / AF2122/97).